The primary structure comprises 665 residues: DNA ligase (665 aa).

Residues 32 to 36 (DSEYD), 81 to 82 (SL), and E110 contribute to the NAD(+) site. Catalysis depends on K112, which acts as the N6-AMP-lysine intermediate. NAD(+) contacts are provided by R133, E167, K283, and K307. The Zn(2+) site is built by C401, C404, C419, and C424. A BRCT domain is found at 586 to 665 (EGHPDFSGKT…AAFIEKQNGI (80 aa)).

It belongs to the NAD-dependent DNA ligase family. LigA subfamily. Mg(2+) is required as a cofactor. Mn(2+) serves as cofactor.

The catalysed reaction is NAD(+) + (deoxyribonucleotide)n-3'-hydroxyl + 5'-phospho-(deoxyribonucleotide)m = (deoxyribonucleotide)n+m + AMP + beta-nicotinamide D-nucleotide.. DNA ligase that catalyzes the formation of phosphodiester linkages between 5'-phosphoryl and 3'-hydroxyl groups in double-stranded DNA using NAD as a coenzyme and as the energy source for the reaction. It is essential for DNA replication and repair of damaged DNA. In Staphylococcus epidermidis (strain ATCC 35984 / DSM 28319 / BCRC 17069 / CCUG 31568 / BM 3577 / RP62A), this protein is DNA ligase.